We begin with the raw amino-acid sequence, 288 residues long: Bifunctional protein FolD (288 aa).

Residues 166–168 (GAS) and Ile232 contribute to the NADP(+) site.

The protein belongs to the tetrahydrofolate dehydrogenase/cyclohydrolase family. Homodimer.

The catalysed reaction is (6R)-5,10-methylene-5,6,7,8-tetrahydrofolate + NADP(+) = (6R)-5,10-methenyltetrahydrofolate + NADPH. It carries out the reaction (6R)-5,10-methenyltetrahydrofolate + H2O = (6R)-10-formyltetrahydrofolate + H(+). Its pathway is one-carbon metabolism; tetrahydrofolate interconversion. Catalyzes the oxidation of 5,10-methylenetetrahydrofolate to 5,10-methenyltetrahydrofolate and then the hydrolysis of 5,10-methenyltetrahydrofolate to 10-formyltetrahydrofolate. The polypeptide is Bifunctional protein FolD (Escherichia fergusonii (strain ATCC 35469 / DSM 13698 / CCUG 18766 / IAM 14443 / JCM 21226 / LMG 7866 / NBRC 102419 / NCTC 12128 / CDC 0568-73)).